Consider the following 1051-residue polypeptide: Outer capsid protein VP2 (1051 aa).

Belongs to the orbivirus VP2 family.

It is found in the virion. Functionally, the VP2 protein is one of the two proteins (with VP5) which constitute the virus particle outer capsid. It is the major target of the host immunogenic response. In African horse sickness virus (AHSV), this protein is Outer capsid protein VP2 (Segment-2).